The following is a 211-amino-acid chain: Rho-related GTP-binding protein RhoF (211 aa).

Met-1 is modified (N-acetylmethionine). Residue 26 to 33 participates in GTP binding; the sequence is GDGGCGKT. Residues 48–56 carry the Effector region motif; the sequence is YAPSVFEKY. GTP-binding positions include 73–77 and 131–134; these read DTAGQ and CKTD. Cys-208 carries the cysteine methyl ester modification. A lipid anchor (S-geranylgeranyl cysteine) is attached at Cys-208. Positions 209–211 are cleaved as a propeptide — removed in mature form; it reads LLL.

The protein belongs to the small GTPase superfamily. Rho family.

It localises to the cell membrane. The protein localises to the cytoplasm. The protein resides in the cytoskeleton. Functionally, plasma membrane-associated small GTPase which cycles between an active GTP-bound and an inactive GDP-bound state. Causes the formation of thin, actin-rich surface projections called filopodia. Functions cooperatively with CDC42 and Rac to generate additional structures, increasing the diversity of actin-based morphology. In Mus musculus (Mouse), this protein is Rho-related GTP-binding protein RhoF (Rhof).